Consider the following 941-residue polypeptide: Isoleucine--tRNA ligase (941 aa).

A 'HIGH' region motif is present at residues 59–69 (PYANGNIHIGH). Position 562 (Glu562) interacts with L-isoleucyl-5'-AMP. The 'KMSKS' region motif lies at 603–607 (KMSKS). Lys606 contributes to the ATP binding site. Residues Cys904, Cys907, Cys924, and Cys927 each contribute to the Zn(2+) site.

Belongs to the class-I aminoacyl-tRNA synthetase family. IleS type 1 subfamily. As to quaternary structure, monomer. Zn(2+) serves as cofactor.

The protein localises to the cytoplasm. The catalysed reaction is tRNA(Ile) + L-isoleucine + ATP = L-isoleucyl-tRNA(Ile) + AMP + diphosphate. In terms of biological role, catalyzes the attachment of isoleucine to tRNA(Ile). As IleRS can inadvertently accommodate and process structurally similar amino acids such as valine, to avoid such errors it has two additional distinct tRNA(Ile)-dependent editing activities. One activity is designated as 'pretransfer' editing and involves the hydrolysis of activated Val-AMP. The other activity is designated 'posttransfer' editing and involves deacylation of mischarged Val-tRNA(Ile). In Haemophilus influenzae (strain ATCC 51907 / DSM 11121 / KW20 / Rd), this protein is Isoleucine--tRNA ligase.